The following is a 378-amino-acid chain: DNA primase small subunit PriS (378 aa).

Residues Asp98, Asp100, and Asp282 contribute to the active site.

This sequence belongs to the eukaryotic-type primase small subunit family. Heterodimer of a small subunit (PriS) and a large subunit (PriL). Mg(2+) serves as cofactor. It depends on Mn(2+) as a cofactor.

Catalytic subunit of DNA primase, an RNA polymerase that catalyzes the synthesis of short RNA molecules used as primers for DNA polymerase during DNA replication. The small subunit contains the primase catalytic core and has DNA synthesis activity on its own. Binding to the large subunit stabilizes and modulates the activity, increasing the rate of DNA synthesis while decreasing the length of the DNA fragments, and conferring RNA synthesis capability. The DNA polymerase activity may enable DNA primase to also catalyze primer extension after primer synthesis. May also play a role in DNA repair. The chain is DNA primase small subunit PriS from Methanosphaerula palustris (strain ATCC BAA-1556 / DSM 19958 / E1-9c).